We begin with the raw amino-acid sequence, 126 residues long: Flagellar assembly factor FliW (126 aa).

It belongs to the FliW family. As to quaternary structure, interacts with translational regulator CsrA and flagellin(s).

It localises to the cytoplasm. In terms of biological role, acts as an anti-CsrA protein, binds CsrA and prevents it from repressing translation of its target genes, one of which is flagellin. Binds to flagellin and participates in the assembly of the flagellum. The chain is Flagellar assembly factor FliW from Sulfurimonas denitrificans (strain ATCC 33889 / DSM 1251) (Thiomicrospira denitrificans (strain ATCC 33889 / DSM 1251)).